Here is a 330-residue protein sequence, read N- to C-terminus: Putative 4-hydroxythreonine-4-phosphate dehydrogenase (330 aa).

The a divalent metal cation site is built by His169, His213, and His263.

Belongs to the PdxA family. As to quaternary structure, homodimer. The cofactor is Zn(2+). Requires Mg(2+) as cofactor. Co(2+) is required as a cofactor.

The protein localises to the cytoplasm. It catalyses the reaction 4-(phosphooxy)-L-threonine + NAD(+) = 3-amino-2-oxopropyl phosphate + CO2 + NADH. It participates in cofactor biosynthesis; pyridoxine 5'-phosphate biosynthesis; pyridoxine 5'-phosphate from D-erythrose 4-phosphate: step 4/5. Functionally, catalyzes the NAD(P)-dependent oxidation of 4-(phosphooxy)-L-threonine (HTP) into 2-amino-3-oxo-4-(phosphooxy)butyric acid which spontaneously decarboxylates to form 3-amino-2-oxopropyl phosphate (AHAP). The sequence is that of Putative 4-hydroxythreonine-4-phosphate dehydrogenase from Novosphingobium aromaticivorans (Sphingomonas aromaticivorans).